A 205-amino-acid polypeptide reads, in one-letter code: Probable GTP-binding protein EngB (205 aa).

The region spanning 22 to 195 is the EngB-type G domain; sequence NLPEVALVGR…LDLLDYFWNG (174 aa). Residues 30–37, 57–61, 75–78, 142–145, and 174–176 each bind GTP; these read GRSNVGKS, GKTQT, DLPG, TKAD, and FSA. Mg(2+) contacts are provided by serine 37 and threonine 59.

This sequence belongs to the TRAFAC class TrmE-Era-EngA-EngB-Septin-like GTPase superfamily. EngB GTPase family. The cofactor is Mg(2+).

Its function is as follows. Necessary for normal cell division and for the maintenance of normal septation. This Heliobacterium modesticaldum (strain ATCC 51547 / Ice1) protein is Probable GTP-binding protein EngB.